Consider the following 164-residue polypeptide: Translation initiation factor IF-3 (164 aa).

Belongs to the IF-3 family. Monomer.

The protein localises to the cytoplasm. IF-3 binds to the 30S ribosomal subunit and shifts the equilibrium between 70S ribosomes and their 50S and 30S subunits in favor of the free subunits, thus enhancing the availability of 30S subunits on which protein synthesis initiation begins. In Bordetella bronchiseptica (strain ATCC BAA-588 / NCTC 13252 / RB50) (Alcaligenes bronchisepticus), this protein is Translation initiation factor IF-3.